The following is a 626-amino-acid chain: Beta-galactosidase large subunit (626 aa).

The active-site Proton donor is the Glu-466. The active-site Nucleophile is the Glu-534.

This sequence belongs to the glycosyl hydrolase 2 family. As to quaternary structure, heterodimer of a large (LacL) and a small subunit (LacM).

The enzyme catalyses Hydrolysis of terminal non-reducing beta-D-galactose residues in beta-D-galactosides.. Component of a beta-galactosidase that displays activity with the artificial chromogenic substrate o-nitrophenyl-beta-D-galactopyranoside (ONPG). This is Beta-galactosidase large subunit from Leuconostoc lactis.